The chain runs to 338 residues: MVLGVVGISYREAALKEREAVINILKDFEANSFFSQHFFGDDGSFVLLLTCHRAEIYYFSKSNRHIQSKLLSRISSLGARPYCYQGLACFTHLFTVTSGMDSLISGETEIQGQVKRAYIKAKTDRDLPFALHFLFQKALKEGKDFRSQVSLSHPVVTIESVVEETLDLHGKSTKDKLLFIGYSEINRKIAKGLSAKGYRNLIFCSRKNISIPYDTVARSQLSFREPYDVIFFGSSESAKDFSGLSLESLASIPSRVIFDFNVPRTFTLAESPKDIICLDMDFISERVQKKLQISKQCTNKEKPFLALAARKQWEVYEKKSSHIPSSQVRASRPKLLIL.

Substrate is bound by residues 50–53 (TCHR), serine 102, 107–109 (ETE), and glutamine 113. The Nucleophile role is filled by cysteine 51. 181–186 (GYSEIN) is an NADP(+) binding site.

This sequence belongs to the glutamyl-tRNA reductase family. As to quaternary structure, homodimer.

The catalysed reaction is (S)-4-amino-5-oxopentanoate + tRNA(Glu) + NADP(+) = L-glutamyl-tRNA(Glu) + NADPH + H(+). It participates in porphyrin-containing compound metabolism; protoporphyrin-IX biosynthesis; 5-aminolevulinate from L-glutamyl-tRNA(Glu): step 1/2. Catalyzes the NADPH-dependent reduction of glutamyl-tRNA(Glu) to glutamate 1-semialdehyde (GSA). In Chlamydia abortus (strain DSM 27085 / S26/3) (Chlamydophila abortus), this protein is Glutamyl-tRNA reductase.